The following is a 189-amino-acid chain: Phosphoheptose isomerase (189 aa).

Residues 34-189 (AVETLKNGNK…CQIIDNELSH (156 aa)) enclose the SIS domain. Residue 49-51 (NGG) participates in substrate binding. Residues His-58 and Glu-62 each contribute to the Zn(2+) site. Residues Glu-62, 91–92 (ND), 117–119 (STS), Ser-122, and Gln-169 each bind substrate. Gln-169 and His-177 together coordinate Zn(2+).

It belongs to the SIS family. GmhA subfamily. In terms of assembly, homotetramer. Zn(2+) is required as a cofactor.

It localises to the cytoplasm. The enzyme catalyses 2 D-sedoheptulose 7-phosphate = D-glycero-alpha-D-manno-heptose 7-phosphate + D-glycero-beta-D-manno-heptose 7-phosphate. It participates in carbohydrate biosynthesis; D-glycero-D-manno-heptose 7-phosphate biosynthesis; D-glycero-alpha-D-manno-heptose 7-phosphate and D-glycero-beta-D-manno-heptose 7-phosphate from sedoheptulose 7-phosphate: step 1/1. Functionally, catalyzes the isomerization of sedoheptulose 7-phosphate in D-glycero-D-manno-heptose 7-phosphate. In Aliarcobacter butzleri (strain RM4018) (Arcobacter butzleri), this protein is Phosphoheptose isomerase.